The chain runs to 445 residues: Glutamate--tRNA ligase 1 (445 aa).

The 'HIGH' region signature appears at 9–19; it reads PSPTGYLHVGN. Residues 238 to 242 carry the 'KMSKS' region motif; that stretch reads KISKR. Lys241 lines the ATP pocket.

It belongs to the class-I aminoacyl-tRNA synthetase family. Glutamate--tRNA ligase type 1 subfamily. Monomer.

It is found in the cytoplasm. It catalyses the reaction tRNA(Glu) + L-glutamate + ATP = L-glutamyl-tRNA(Glu) + AMP + diphosphate. Catalyzes the attachment of glutamate to tRNA(Glu) in a two-step reaction: glutamate is first activated by ATP to form Glu-AMP and then transferred to the acceptor end of tRNA(Glu). The polypeptide is Glutamate--tRNA ligase 1 (Ehrlichia ruminantium (strain Gardel)).